Here is a 310-residue protein sequence, read N- to C-terminus: Protein TIFY 6A (310 aa).

Residues 141–176 enclose the Tify domain; it reads SKPLPPQLTIFYAGSVLVYQDIAPEKAQAIMLLAGN. A Jas motif is present at residues 259–284; the sequence is PQTRKASLARFLEKRKERVINVSPYY. Residues 261–268 carry the Nuclear localization signal motif; sequence TRKASLAR.

Belongs to the TIFY/JAZ family. Homo- and heterodimer. Interacts with MYC2, AFPH2/NINJA, TIFY10A/JAZ1, TIFY6B/JAZ3, TIFY5A/JAZ8, TIFY9/JAZ10 and TIFY3A/JAZ11. Interacts with RHD6 and RSL1. In terms of processing, ubiquitinated. Targeted for degradation by the SCF(COI1) E3 ubiquitin ligase-proteasome pathway during jasmonate signaling.

The protein localises to the nucleus. Functionally, repressor of jasmonate responses. Interacts with and suppresses RHD6 and RSL1 transcription factor activities to negatively regulate jasmonate-stimulated root hair development. In Arabidopsis thaliana (Mouse-ear cress), this protein is Protein TIFY 6A (TIFY6A).